A 310-amino-acid chain; its full sequence is MSYYFITMKGYSINVEEGYKRIFGINIYYKLYRVKGSNRNLVTLHGGPGGSHDYLIPLADLSNYGINVLFYDQFGCGRSDDPKDTSDYTIDHGLEELEELRKQVFGNDKIVLLGHSYGGALAIAYALKYQQFLRGLIVSSGLSSVPYTVKEMRRLIEELPDKYKTIIKRYESLGDFKNPEYLDAVNFFYSQHLLRLKEMPEPVKRTFEYIGKRRTYEIMNGPNEFTIIGTIKDWDVTEQLYKITVPTLITVGKYDEVTVNVAQLIHKNIKGSRLVIFENSSHMAMWEEKDKYLEVIKEFIDQVYSLNMVK.

The AB hydrolase-1 domain occupies 41–288 (LVTLHGGPGG…NSSHMAMWEE (248 aa)). Ser-116 functions as the Nucleophile in the catalytic mechanism. Residue Asp-255 is part of the active site. Catalysis depends on His-282, which acts as the Proton donor.

The protein belongs to the peptidase S33 family. Part of the tricorn proteolytic complex.

The catalysed reaction is Release of N-terminal proline from a peptide.. Cleaves H-Pro-AMC as well as a wide spectrum of amino acid substrates and several peptide substrates without a proline at the N-terminus. In conjunction with the three factors F1, F2 and F3, Tricorn degrades oligopeptides in a sequential manner, yielding free amino acids. The chain is Proline iminopeptidase (pip) from Saccharolobus solfataricus (strain ATCC 35092 / DSM 1617 / JCM 11322 / P2) (Sulfolobus solfataricus).